Here is a 340-residue protein sequence, read N- to C-terminus: Phosphoribosylformylglycinamidine cyclo-ligase (340 aa).

The protein belongs to the AIR synthase family.

It is found in the cytoplasm. It catalyses the reaction 2-formamido-N(1)-(5-O-phospho-beta-D-ribosyl)acetamidine + ATP = 5-amino-1-(5-phospho-beta-D-ribosyl)imidazole + ADP + phosphate + H(+). Its pathway is purine metabolism; IMP biosynthesis via de novo pathway; 5-amino-1-(5-phospho-D-ribosyl)imidazole from N(2)-formyl-N(1)-(5-phospho-D-ribosyl)glycinamide: step 2/2. The chain is Phosphoribosylformylglycinamidine cyclo-ligase from Streptococcus pneumoniae serotype 2 (strain D39 / NCTC 7466).